The sequence spans 184 residues: Effector CFEM1 (184 aa).

The N-terminal stretch at 1–17 is a signal peptide; sequence MKYSVAFVALAAVAAQA. In terms of domain architecture, CFEM spans 18–112; sequence QSLADVPKCA…PTTTAAATST (95 aa). 4 disulfides stabilise this stretch: cysteine 26-cysteine 68, cysteine 30-cysteine 63, cysteine 41-cysteine 48, and cysteine 50-cysteine 85. Aspartate 45 provides a ligand contact to heme. 2 disordered regions span residues 83–106 and 136–163; these read NLCK…PTTT and IIPT…EQAN. Positions 88 to 103 are enriched in basic and acidic residues; it reads PPKESEAKSTAEEEKP. Asparagine 163 is lipidated: GPI-anchor amidated asparagine. A propeptide spans 164–184 (removed in mature form); sequence GAAGLKGLGALAMAAFAALAL.

Belongs to the RBT5 family. As to quaternary structure, interacts with Z.mays LRR5; the interaction is direct. Interacts (via CFEM domain) with Z.mays WAK17 isoform 2; the interaction is direct.

It is found in the secreted. The protein resides in the cell wall. Its subcellular location is the cell membrane. The protein localises to the cell septum. It localises to the cytoplasm. Its function is as follows. Suppresses host programmed cell death during infection by binding to Z.mays WAK17 isoform 2 and Z.mays LRR5, to prevent activation of Z.mays WAK17 isoform 1 and the downstream hypersensitive response. This Gibberella zeae (strain ATCC MYA-4620 / CBS 123657 / FGSC 9075 / NRRL 31084 / PH-1) (Wheat head blight fungus) protein is Effector CFEM1.